A 373-amino-acid chain; its full sequence is Dual-specificity RNA methyltransferase RlmN (373 aa).

Residue E94 is the Proton acceptor of the active site. In terms of domain architecture, Radical SAM core spans 100–339 (EDDRATLCVS…VIVRKTRGDD (240 aa)). The cysteines at positions 107 and 344 are disulfide-linked. Residues C114, C118, and C121 each coordinate [4Fe-4S] cluster. S-adenosyl-L-methionine-binding positions include 168–169 (GE), S200, 222–224 (SIH), and N301. Residue C344 is the S-methylcysteine intermediate of the active site.

The protein belongs to the radical SAM superfamily. RlmN family. Requires [4Fe-4S] cluster as cofactor.

It is found in the cytoplasm. It catalyses the reaction adenosine(2503) in 23S rRNA + 2 reduced [2Fe-2S]-[ferredoxin] + 2 S-adenosyl-L-methionine = 2-methyladenosine(2503) in 23S rRNA + 5'-deoxyadenosine + L-methionine + 2 oxidized [2Fe-2S]-[ferredoxin] + S-adenosyl-L-homocysteine. The catalysed reaction is adenosine(37) in tRNA + 2 reduced [2Fe-2S]-[ferredoxin] + 2 S-adenosyl-L-methionine = 2-methyladenosine(37) in tRNA + 5'-deoxyadenosine + L-methionine + 2 oxidized [2Fe-2S]-[ferredoxin] + S-adenosyl-L-homocysteine. In terms of biological role, specifically methylates position 2 of adenine 2503 in 23S rRNA and position 2 of adenine 37 in tRNAs. m2A2503 modification seems to play a crucial role in the proofreading step occurring at the peptidyl transferase center and thus would serve to optimize ribosomal fidelity. The protein is Dual-specificity RNA methyltransferase RlmN of Shewanella sp. (strain MR-7).